A 162-amino-acid chain; its full sequence is CASP-like protein 1C2 (162 aa).

The Cytoplasmic segment spans residues 1–6; it reads MMKPKR. The chain crosses the membrane as a helical span at residues 7–27; it reads LLSLLLRLIAVGATLAAVIIM. Over 28 to 49 the chain is Extracellular; it reads ATSHEKGTFFAVSYEAKYTDTP. The helical transmembrane segment at 50–70 threads the bilayer; sequence AFKYFVIANAIVTVYGFLVLF. Residues 71-79 lie on the Cytoplasmic side of the membrane; that stretch reads HPPGSPLWR. Residues 80 to 100 form a helical membrane-spanning segment; the sequence is LVLALDLVFTMLLISSISAAL. The Extracellular segment spans residues 101–130; that stretch reads AVAQVGKNGNSRAGWLPVCGQVTKYCNQVT. A helical transmembrane segment spans residues 131 to 151; the sequence is GALVAGLIALITYIILLLHSI. The Cytoplasmic segment spans residues 152–162; the sequence is YTFLNPLLEKA.

The protein belongs to the Casparian strip membrane proteins (CASP) family. As to quaternary structure, homodimer and heterodimers.

The protein resides in the cell membrane. This Populus trichocarpa (Western balsam poplar) protein is CASP-like protein 1C2.